The sequence spans 680 residues: UvrABC system protein B (680 aa).

In terms of domain architecture, Helicase ATP-binding spans 27–192 (SNIEAGVTDQ…ERNDYDFHRG (166 aa)). Residue 40–47 (GVTGSGKT) participates in ATP binding. The Beta-hairpin signature appears at 93–116 (YYDYYQPEAYVPSSDTYIEKDSSI). The Helicase C-terminal domain maps to 432–594 (QVDDLLGECR…IVPATIRKAV (163 aa)). The 36-residue stretch at 637–672 (AKQIQQLERDMREAAKELEFERAAELRDRIRLLREH) folds into the UVR domain.

Belongs to the UvrB family. Forms a heterotetramer with UvrA during the search for lesions. Interacts with UvrC in an incision complex.

Its subcellular location is the cytoplasm. Its function is as follows. The UvrABC repair system catalyzes the recognition and processing of DNA lesions. A damage recognition complex composed of 2 UvrA and 2 UvrB subunits scans DNA for abnormalities. Upon binding of the UvrA(2)B(2) complex to a putative damaged site, the DNA wraps around one UvrB monomer. DNA wrap is dependent on ATP binding by UvrB and probably causes local melting of the DNA helix, facilitating insertion of UvrB beta-hairpin between the DNA strands. Then UvrB probes one DNA strand for the presence of a lesion. If a lesion is found the UvrA subunits dissociate and the UvrB-DNA preincision complex is formed. This complex is subsequently bound by UvrC and the second UvrB is released. If no lesion is found, the DNA wraps around the other UvrB subunit that will check the other stand for damage. This Nitratidesulfovibrio vulgaris (strain DSM 19637 / Miyazaki F) (Desulfovibrio vulgaris) protein is UvrABC system protein B.